The sequence spans 553 residues: Formate--tetrahydrofolate ligase (553 aa).

63–70 contributes to the ATP binding site; that stretch reads TPAGEGKS.

The protein belongs to the formate--tetrahydrofolate ligase family.

The catalysed reaction is (6S)-5,6,7,8-tetrahydrofolate + formate + ATP = (6R)-10-formyltetrahydrofolate + ADP + phosphate. The protein operates within one-carbon metabolism; tetrahydrofolate interconversion. This is Formate--tetrahydrofolate ligase from Limosilactobacillus fermentum (strain NBRC 3956 / LMG 18251) (Lactobacillus fermentum).